A 98-amino-acid polypeptide reads, in one-letter code: MSLVHMNIGLAFTVAFLGLLMYRSHLMSSLLCLEGMMLTLFIMSSIMVLNMHFTLASMLPIILLVFAACEAAVGLSLLVMVSNTYGVDYVQNLNLLQC.

3 helical membrane-spanning segments follow: residues 1–21 (MSLVHMNIGLAFTVAFLGLLM), 29–49 (SLLCLEGMMLTLFIMSSIMVL), and 61–81 (IILLVFAACEAAVGLSLLVMV).

It belongs to the complex I subunit 4L family. Core subunit of respiratory chain NADH dehydrogenase (Complex I) which is composed of 45 different subunits.

The protein resides in the mitochondrion inner membrane. The catalysed reaction is a ubiquinone + NADH + 5 H(+)(in) = a ubiquinol + NAD(+) + 4 H(+)(out). In terms of biological role, core subunit of the mitochondrial membrane respiratory chain NADH dehydrogenase (Complex I) which catalyzes electron transfer from NADH through the respiratory chain, using ubiquinone as an electron acceptor. Part of the enzyme membrane arm which is embedded in the lipid bilayer and involved in proton translocation. The chain is NADH-ubiquinone oxidoreductase chain 4L (MT-ND4L) from Pseudosoriculus fumidus (Taiwanese brown-toothed shrew).